A 393-amino-acid polypeptide reads, in one-letter code: NAD(P)H-quinone oxidoreductase subunit H, chloroplastic (393 aa).

Belongs to the complex I 49 kDa subunit family. In terms of assembly, NDH is composed of at least 16 different subunits, 5 of which are encoded in the nucleus.

It localises to the plastid. It is found in the chloroplast thylakoid membrane. The enzyme catalyses a plastoquinone + NADH + (n+1) H(+)(in) = a plastoquinol + NAD(+) + n H(+)(out). It catalyses the reaction a plastoquinone + NADPH + (n+1) H(+)(in) = a plastoquinol + NADP(+) + n H(+)(out). Functionally, NDH shuttles electrons from NAD(P)H:plastoquinone, via FMN and iron-sulfur (Fe-S) centers, to quinones in the photosynthetic chain and possibly in a chloroplast respiratory chain. The immediate electron acceptor for the enzyme in this species is believed to be plastoquinone. Couples the redox reaction to proton translocation, and thus conserves the redox energy in a proton gradient. This chain is NAD(P)H-quinone oxidoreductase subunit H, chloroplastic, found in Amborella trichopoda.